The primary structure comprises 436 residues: uncharacterized protein (436 aa).

This is an uncharacterized protein from Diadromus pulchellus (Parasitic wasp).